We begin with the raw amino-acid sequence, 381 residues long: Carboxylesterase 5A (381 aa).

The active-site Acyl-ester intermediate is serine 108. Cysteine 162 and cysteine 173 form a disulfide bridge. The N-linked (GlcNAc...) asparagine glycan is linked to asparagine 163. The active-site Charge relay system is the glutamate 227. A glycan (N-linked (GlcNAc...) asparagine) is linked at asparagine 245. Catalysis depends on histidine 336, which acts as the Charge relay system.

This sequence belongs to the type-B carboxylesterase/lipase family. In terms of assembly, component of a epididymal complex at least composed of soluble form of prion protein PRNP, CLU, BPI, CES5A, MANBA and GLB1. In terms of processing, N-glycosylated. In terms of tissue distribution, detected in corpus and cauda epididymal fluid. Present in seminal fluid but not found to be associated with sperm (at protein level). Not expressed in other tissues.

Its subcellular location is the secreted. It catalyses the reaction a carboxylic ester + H2O = an alcohol + a carboxylate + H(+). Involved in the detoxification of xenobiotics and in the activation of ester and amide prodrugs. The sequence is that of Carboxylesterase 5A (CES5A) from Ovis aries (Sheep).